Reading from the N-terminus, the 2080-residue chain is Dedicator of cytokinesis protein 6 (2080 aa).

Positions 20 to 31 (EVRKQVSRERSG) are enriched in basic and acidic residues. Disordered stretches follow at residues 20–44 (EVRK…SSLG), 156–189 (QDTP…SGAS), and 408–441 (PQDR…GDDA). Over residues 32 to 42 (SPHSSRRSSSS) the composition is skewed to low complexity. Ser178 is subject to Phosphoserine. Residues 408-425 (PQDRDSDSEGERRPTWAE) are compositionally biased toward basic and acidic residues. The region spanning 546–712 (RNLLFVYPHS…GVFSVELTAV (167 aa)) is the C2 DOCK-type domain. Arg863 is modified (omega-N-methylarginine). 3 positions are modified to phosphoserine: Ser870, Ser878, and Ser882. A disordered region spans residues 1101-1123 (ASPSPSVSSTTSQSSTFSSQAPD). Positions 1104–1122 (SPSVSSTTSQSSTFSSQAP) are enriched in low complexity. At Ser1341 the chain carries Phosphoserine. Residues 1620-2056 (RGYQGSPDLR…LQPLLTQRLP (437 aa)) form the DOCKER domain. The residue at position 2064 (Thr2064) is a Phosphothreonine. Phosphoserine is present on residues Ser2065 and Ser2069.

The protein belongs to the DOCK family. Widely expressed with highest levels in lung and heart.

It localises to the cytoplasm. Its subcellular location is the perinuclear region. Its function is as follows. Acts as a guanine nucleotide exchange factor (GEF) for CDC42 and RAC1 small GTPases. Through its activation of CDC42 and RAC1, regulates neurite outgrowth in an vitro differentiation system. This Mus musculus (Mouse) protein is Dedicator of cytokinesis protein 6 (Dock6).